Reading from the N-terminus, the 304-residue chain is 2-phospho-L-lactate transferase (304 aa).

Aspartate 49 provides a ligand contact to 7,8-didemethyl-8-hydroxy-5-deazariboflavin.

Belongs to the CofD family. Homodimer. Mg(2+) serves as cofactor.

It catalyses the reaction (2S)-lactyl-2-diphospho-5'-guanosine + 7,8-didemethyl-8-hydroxy-5-deazariboflavin = oxidized coenzyme F420-0 + GMP + H(+). It participates in cofactor biosynthesis; coenzyme F420 biosynthesis. Its function is as follows. Catalyzes the transfer of the 2-phospholactate moiety from (2S)-lactyl-2-diphospho-5'-guanosine to 7,8-didemethyl-8-hydroxy-5-deazariboflavin (FO) with the formation of oxidized coenzyme F420-0 and GMP. The chain is 2-phospho-L-lactate transferase from Methanocorpusculum labreanum (strain ATCC 43576 / DSM 4855 / Z).